The sequence spans 269 residues: Hydroxypyruvate/pyruvate aldolase (269 aa).

His48 acts as the Proton acceptor in catalysis. A divalent metal cation-binding residues include Glu152 and Asp178.

The protein belongs to the HpcH/HpaI aldolase family. A divalent metal cation serves as cofactor.

It carries out the reaction D-glyceraldehyde + pyruvate = 2-dehydro-3-deoxy-L-galactonate. Functionally, aldolase which can catalyze in vitro the aldolisation reaction between hydroxypyruvate (HPA) or pyruvate (PA) and D-glyceraldehyde (D-GA). The condensation of pyruvate and D-glyceraldehyde produces 2-dehydro-3-deoxy-L-galactonate as the major product. Has weak activity with hydroxypyruvate and D-glyceraldehyde. In Delftia acidovorans (strain DSM 14801 / SPH-1), this protein is Hydroxypyruvate/pyruvate aldolase.